The sequence spans 485 residues: Warthog protein 1 (485 aa).

A signal peptide spans 1–21; that stretch reads MMVMNPLTATFLAALIGTAAS. A disordered region spans residues 236–258; that stretch reads DQRLSPSTDVQSDSYVSPTEADP. The span at 239-252 shows a compositional bias: polar residues; that stretch reads LSPSTDVQSDSYVS.

Belongs to the hedgehog family. In terms of processing, the C-terminal domain displays an autoproteolysis activity.

Its subcellular location is the secreted. It is found in the cell surface. The protein resides in the cell membrane. It localises to the extracellular space. Functionally, intercellular signal essential for a variety of patterning events during development. The chain is Warthog protein 1 (wrt-1) from Caenorhabditis elegans.